The primary structure comprises 89 residues: Small ribosomal subunit protein uS15 (89 aa).

The interval methionine 1–serine 24 is disordered.

It belongs to the universal ribosomal protein uS15 family. Part of the 30S ribosomal subunit. Forms a bridge to the 50S subunit in the 70S ribosome, contacting the 23S rRNA.

Functionally, one of the primary rRNA binding proteins, it binds directly to 16S rRNA where it helps nucleate assembly of the platform of the 30S subunit by binding and bridging several RNA helices of the 16S rRNA. Forms an intersubunit bridge (bridge B4) with the 23S rRNA of the 50S subunit in the ribosome. The chain is Small ribosomal subunit protein uS15 from Microcystis aeruginosa (strain NIES-843 / IAM M-2473).